A 298-amino-acid polypeptide reads, in one-letter code: Ribosomal RNA small subunit methyltransferase H (298 aa).

Residues 46–48, D65, F92, D108, and H115 each bind S-adenosyl-L-methionine; that span reads GGH.

This sequence belongs to the methyltransferase superfamily. RsmH family.

The protein localises to the cytoplasm. The enzyme catalyses cytidine(1402) in 16S rRNA + S-adenosyl-L-methionine = N(4)-methylcytidine(1402) in 16S rRNA + S-adenosyl-L-homocysteine + H(+). Functionally, specifically methylates the N4 position of cytidine in position 1402 (C1402) of 16S rRNA. The polypeptide is Ribosomal RNA small subunit methyltransferase H (Nostoc punctiforme (strain ATCC 29133 / PCC 73102)).